Reading from the N-terminus, the 230-residue chain is MEKNIPKHIAIIMDGNGRWAKKRGLARSFGHMEGAKTLRKALEYLTEIGVKYLTVYAFSTENWNRPQDEVSTLMKLFLKYIKNERKNMMKNKIRFFVSGRKNNVPEKLQKEIEKLEEETKNNDKITLNIAFNYGSRAEIVDAVNRIIKDGKENITEEDFSKYLYNDFPDPDLVIRTSGEMRISNFLLWQIAYSELYITDVLWPDFDEKEIDKAIESYNQRERRFGGVKNV.

The active site involves Asp-14. Asp-14 lines the Mg(2+) pocket. Substrate contacts are provided by residues Gly-15–Arg-18, Trp-19, Arg-27, His-31, and Ser-59–Glu-61. The Proton acceptor role is filled by Asn-62. Substrate-binding positions include Trp-63, Arg-65, Arg-175, and Arg-181–Ser-183. Mg(2+) is bound at residue Glu-194.

This sequence belongs to the UPP synthase family. As to quaternary structure, homodimer. Mg(2+) serves as cofactor.

Its function is as follows. Catalyzes the condensation of isopentenyl diphosphate (IPP) with allylic pyrophosphates generating different type of terpenoids. In Fusobacterium nucleatum subsp. nucleatum (strain ATCC 25586 / DSM 15643 / BCRC 10681 / CIP 101130 / JCM 8532 / KCTC 2640 / LMG 13131 / VPI 4355), this protein is Isoprenyl transferase.